The following is a 103-amino-acid chain: Acylphosphatase-2 (103 aa).

Ser2 is modified (N-acetylserine). One can recognise an Acylphosphatase-like domain in the interval 13–103 (SVDYEVFGRV…LDFSGFSTRY (91 aa)). An S-glutathionyl cysteine; alternate modification is found at Cys26. Residues Arg28 and Asn46 contribute to the active site.

This sequence belongs to the acylphosphatase family. Monomer (TU1) or homodimer (TU3) in absence of reducing factors; disulfide linked.

It catalyses the reaction an acyl phosphate + H2O = a carboxylate + phosphate + H(+). In terms of biological role, its physiological role is not yet clear. The chain is Acylphosphatase-2 (ACYP2) from Meleagris gallopavo (Wild turkey).